Reading from the N-terminus, the 768-residue chain is DNA ligase (768 aa).

Residues 61–65 (DAEFD), 110–111 (SL), and glutamate 146 contribute to the NAD(+) site. The active-site N6-AMP-lysine intermediate is lysine 148. The NAD(+) site is built by arginine 169, glutamate 206, lysine 322, and lysine 346. Zn(2+) contacts are provided by cysteine 443, cysteine 446, cysteine 462, and cysteine 468. Residues 661–750 (SVPRTLEGLT…PAQTGTEAEA (90 aa)) form the BRCT domain. The tract at residues 739-768 (NGPAQTGTEAEAATDEATVVDETAAEAATE) is disordered. The segment covering 746-768 (TEAEAATDEATVVDETAAEAATE) has biased composition (low complexity).

It belongs to the NAD-dependent DNA ligase family. LigA subfamily. Mg(2+) serves as cofactor. Requires Mn(2+) as cofactor.

The enzyme catalyses NAD(+) + (deoxyribonucleotide)n-3'-hydroxyl + 5'-phospho-(deoxyribonucleotide)m = (deoxyribonucleotide)n+m + AMP + beta-nicotinamide D-nucleotide.. Its function is as follows. DNA ligase that catalyzes the formation of phosphodiester linkages between 5'-phosphoryl and 3'-hydroxyl groups in double-stranded DNA using NAD as a coenzyme and as the energy source for the reaction. It is essential for DNA replication and repair of damaged DNA. In Paenarthrobacter aurescens (strain TC1), this protein is DNA ligase.